Reading from the N-terminus, the 72-residue chain is MLVITRKKGESLLIGDDIEITVVKLDDGSVKLAIDAPKNLTILRKELYNEVQEENKKATNFNPSILKNIKSK.

Belongs to the CsrA/RsmA family. Homodimer; the beta-strands of each monomer intercalate to form a hydrophobic core, while the alpha-helices form wings that extend away from the core.

It is found in the cytoplasm. A translational regulator that binds mRNA to regulate translation initiation and/or mRNA stability. Usually binds in the 5'-UTR at or near the Shine-Dalgarno sequence preventing ribosome-binding, thus repressing translation. Its main target seems to be the major flagellin gene, while its function is anatagonized by FliW. The sequence is that of Translational regulator CsrA from Clostridium botulinum (strain ATCC 19397 / Type A).